The chain runs to 141 residues: Hemoglobin subunit alpha (141 aa).

The 141-residue stretch at Val1–Arg141 folds into the Globin domain. A Phosphoserine modification is found at Ser3. Lys7 carries the post-translational modification N6-succinyllysine. The residue at position 8 (Thr8) is a Phosphothreonine. N6-succinyllysine is present on Lys11. Lys16 carries the N6-acetyllysine; alternate modification. N6-succinyllysine; alternate is present on Lys16. Tyr24 bears the Phosphotyrosine mark. The residue at position 35 (Ser35) is a Phosphoserine. Position 40 is an N6-succinyllysine (Lys40). At Ser49 the chain carries Phosphoserine. O2 is bound at residue His58. His87 lines the heme b pocket. Position 102 is a phosphoserine (Ser102). Phosphothreonine is present on Thr108. Ser124 carries the post-translational modification Phosphoserine. Phosphothreonine is present on residues Thr134 and Thr137. Ser138 is subject to Phosphoserine.

This sequence belongs to the globin family. In terms of assembly, heterotetramer of two alpha chains and two beta chains. As to expression, red blood cells.

Functionally, involved in oxygen transport from the lung to the various peripheral tissues. Hemopressin acts as an antagonist peptide of the cannabinoid receptor CNR1. Hemopressin-binding efficiently blocks cannabinoid receptor CNR1 and subsequent signaling. This chain is Hemoglobin subunit alpha (HBA), found in Odobenus rosmarus divergens (Pacific walrus).